The primary structure comprises 894 residues: Phosphoenolpyruvate carboxylase (894 aa).

Active-site residues include His143 and Lys556.

This sequence belongs to the PEPCase type 1 family. It depends on Mg(2+) as a cofactor.

The enzyme catalyses oxaloacetate + phosphate = phosphoenolpyruvate + hydrogencarbonate. In terms of biological role, forms oxaloacetate, a four-carbon dicarboxylic acid source for the tricarboxylic acid cycle. This chain is Phosphoenolpyruvate carboxylase, found in Acinetobacter baylyi (strain ATCC 33305 / BD413 / ADP1).